The chain runs to 339 residues: Serine racemase (339 aa).

Glu13 contacts Mg(2+). ATP-binding residues include Ser31, Ser32, Ile33, Lys51, and Thr52. Lys56 (proton acceptor) is an active-site residue. Position 56 is an N6-(pyridoxal phosphate)lysine (Lys56). Residue Pro69 coordinates Ca(2+). Thr71 is modified (phosphothreonine). A Ca(2+)-binding site is contributed by Thr81. Ser84 acts as the Proton acceptor in catalysis. Position 86 (Asn86) interacts with pyridoxal 5'-phosphate. Gln89 provides a ligand contact to ATP. Cys113 is subject to S-nitrosocysteine. ATP is bound at residue Tyr121. Position 154 (Asn154) interacts with pyridoxal 5'-phosphate. Position 178 (Asp178) interacts with Mg(2+). The pyridoxal 5'-phosphate site is built by Gly185, Gly186, Gly187, Gly188, and Met189. 4 residues coordinate Mg(2+): Glu210, Ala214, Asp216, and Asn247. Ca(2+) contacts are provided by Glu210, Ala214, Asp216, and Asn247. Positions 210, 214, and 216 each coordinate Mn(2+). Residue Lys279 participates in ATP binding. Pyridoxal 5'-phosphate is bound at residue Ser313. Residue Asn316 coordinates ATP.

It belongs to the serine/threonine dehydratase family. Homodimer. It depends on Mg(2+) as a cofactor. Mn(2+) is required as a cofactor. Requires Ca(2+) as cofactor. Pyridoxal 5'-phosphate serves as cofactor. In terms of processing, S-nitrosylated, leading to decrease the enzyme activity. In terms of tissue distribution, expressed in the hippocampus (at protein level). Expressed in the small intestine.

It carries out the reaction L-serine = D-serine. The enzyme catalyses D-serine = pyruvate + NH4(+). It catalyses the reaction L-serine = pyruvate + NH4(+). Its activity is regulated as follows. Allosterically activated by magnesium, and possibly also other divalent metal cations. Allosterically activated by ATP, ADP or GTP. In terms of biological role, catalyzes the synthesis of D-serine from L-serine. D-serine is a key coagonist with glutamate at NMDA receptors. Has dehydratase activity towards both L-serine and D-serine. This Mus musculus (Mouse) protein is Serine racemase (Srr).